The sequence spans 309 residues: Ribonuclease Z (309 aa).

7 residues coordinate Zn(2+): His-63, His-65, Asp-67, His-68, His-145, Asp-216, and His-274. Asp-67 serves as the catalytic Proton acceptor.

This sequence belongs to the RNase Z family. As to quaternary structure, homodimer. It depends on Zn(2+) as a cofactor.

It carries out the reaction Endonucleolytic cleavage of RNA, removing extra 3' nucleotides from tRNA precursor, generating 3' termini of tRNAs. A 3'-hydroxy group is left at the tRNA terminus and a 5'-phosphoryl group is left at the trailer molecule.. Functionally, zinc phosphodiesterase, which displays some tRNA 3'-processing endonuclease activity. Probably involved in tRNA maturation, by removing a 3'-trailer from precursor tRNA. The protein is Ribonuclease Z of Streptococcus thermophilus (strain CNRZ 1066).